Consider the following 401-residue polypeptide: Acetate kinase (401 aa).

Asn9 is a binding site for Mg(2+). Lys16 is an ATP binding site. Arg88 serves as a coordination point for substrate. Asp147 acts as the Proton donor/acceptor in catalysis. ATP-binding positions include His207–Gly211, Asp282–Arg284, and Gly333–Asn337. Glu388 lines the Mg(2+) pocket.

The protein belongs to the acetokinase family. In terms of assembly, homodimer. Mg(2+) is required as a cofactor. It depends on Mn(2+) as a cofactor.

Its subcellular location is the cytoplasm. The enzyme catalyses acetate + ATP = acetyl phosphate + ADP. It participates in metabolic intermediate biosynthesis; acetyl-CoA biosynthesis; acetyl-CoA from acetate: step 1/2. Its function is as follows. Catalyzes the formation of acetyl phosphate from acetate and ATP. Can also catalyze the reverse reaction. The polypeptide is Acetate kinase (Haemophilus influenzae (strain PittGG)).